The primary structure comprises 138 residues: Transcription antitermination protein NusB (138 aa).

This sequence belongs to the NusB family.

Involved in transcription antitermination. Required for transcription of ribosomal RNA (rRNA) genes. Binds specifically to the boxA antiterminator sequence of the ribosomal RNA (rrn) operons. The protein is Transcription antitermination protein NusB of Yersinia pseudotuberculosis serotype O:1b (strain IP 31758).